A 635-amino-acid chain; its full sequence is Cationic amino acid transporter 4 (635 aa).

The next 3 helical transmembrane spans lie at 42-62 (LTLLGVGGMVGSGLYVLTGTV), 66-86 (MAGPAVLLSFLVAAVASLLAA), and 113-133 (IWAFLIGWNVLLEYLIGGAAV). Residues asparagine 146, asparagine 151, and asparagine 195 are each glycosylated (N-linked (GlcNAc...) asparagine). The helical transmembrane segment at 197–217 (TFSAISLIVILFIIVLGFILA) threads the bilayer. Asparagine 221 is a glycosylation site (N-linked (GlcNAc...) asparagine). Transmembrane regions (helical) follow at residues 229 to 249 (FAPFGFSGILAGTATCFYAFV), 270 to 290 (MAIAISLSLAAGAYILVSTVL), 318 to 338 (GFIVAVGSICAMNTVLLSNLF), 365 to 385 (QVPVVGILVFGVLMALLALLL), and 391 to 411 (VQFLSIGTLLAYTFVATSIIV). Phosphoserine is present on residues serine 422 and serine 427. The next 4 membrane-spanning stretches (helical) occupy residues 478–498 (VAWALGILVASAISLACVLVF), 508–528 (WGYVLLLVISGAVFLSSLLVL), 539–559 (TFQIPLVPLTPALSILLNTCL), and 567–587 (TWLRFIFWLLVGLVVYFGYGI).

It belongs to the amino acid-polyamine-organocation (APC) superfamily. Cationic amino acid transporter (CAT) (TC 2.A.3.3) family.

It localises to the membrane. In terms of biological role, involved in the transport of the cationic amino acids (arginine, lysine and ornithine). The polypeptide is Cationic amino acid transporter 4 (Slc7a4) (Mus musculus (Mouse)).